A 1438-amino-acid polypeptide reads, in one-letter code: DNA-directed RNA polymerase subunit beta' (1438 aa).

The Zn(2+) site is built by Cys72, Cys74, Cys87, and Cys90. Mg(2+) is bound by residues Asp483, Asp485, and Asp487. Zn(2+) is bound by residues Cys831, Cys905, Cys912, and Cys915.

The protein belongs to the RNA polymerase beta' chain family. As to quaternary structure, the RNAP catalytic core consists of 2 alpha, 1 beta, 1 beta' and 1 omega subunit. When a sigma factor is associated with the core the holoenzyme is formed, which can initiate transcription. Requires Mg(2+) as cofactor. The cofactor is Zn(2+).

The enzyme catalyses RNA(n) + a ribonucleoside 5'-triphosphate = RNA(n+1) + diphosphate. DNA-dependent RNA polymerase catalyzes the transcription of DNA into RNA using the four ribonucleoside triphosphates as substrates. The polypeptide is DNA-directed RNA polymerase subunit beta' (Flavobacterium psychrophilum (strain ATCC 49511 / DSM 21280 / CIP 103535 / JIP02/86)).